The following is a 107-amino-acid chain: Proteinase inhibitor I-A (107 aa).

Positions 1–22 (MVKFAHVVAFLLLASLIQPLTA) are cleaved as a signal peptide. The propeptide occupies 23 to 36 (RDLEINVLQLDVSQ).

Belongs to the protease inhibitor I13 (potato type I serine protease inhibitor) family.

The protein localises to the secreted. This Nicotiana tabacum (Common tobacco) protein is Proteinase inhibitor I-A (TIMPB).